We begin with the raw amino-acid sequence, 580 residues long: Arrestin domain-containing protein A (580 aa).

3 N-linked (GlcNAc...) asparagine glycosylation sites follow: asparagine 27, asparagine 33, and asparagine 60. A disordered region spans residues 31-54 (NVNTTSSHHHHHSNSGNAEVSFNG). Disordered regions lie at residues 67–86 (ETHSGHHHHHSNGGNAEISI) and 95–114 (MTMSVTDSNSGHHHHHHKES). A helical membrane pass occupies residues 118-138 (NLSLGGIVGAVVGAVTGGVMI). N-linked (GlcNAc...) asparagine glycosylation is found at asparagine 149, asparagine 341, and asparagine 342. An FYVE-type zinc finger spans residues 468-528 (DEHATACRKC…VCEECYPIAT (61 aa)). Positions 474, 477, 490, 493, 498, 501, 520, and 523 each coordinate Zn(2+).

This sequence belongs to the arrestin family.

It localises to the membrane. The polypeptide is Arrestin domain-containing protein A (adcA) (Dictyostelium discoideum (Social amoeba)).